Reading from the N-terminus, the 347-residue chain is UDP-3-O-acylglucosamine N-acyltransferase (347 aa).

The active-site Proton acceptor is His248.

The protein belongs to the transferase hexapeptide repeat family. LpxD subfamily. As to quaternary structure, homotrimer.

The enzyme catalyses a UDP-3-O-[(3R)-3-hydroxyacyl]-alpha-D-glucosamine + a (3R)-hydroxyacyl-[ACP] = a UDP-2-N,3-O-bis[(3R)-3-hydroxyacyl]-alpha-D-glucosamine + holo-[ACP] + H(+). It participates in bacterial outer membrane biogenesis; LPS lipid A biosynthesis. Its function is as follows. Catalyzes the N-acylation of UDP-3-O-acylglucosamine using 3-hydroxyacyl-ACP as the acyl donor. Is involved in the biosynthesis of lipid A, a phosphorylated glycolipid that anchors the lipopolysaccharide to the outer membrane of the cell. This is UDP-3-O-acylglucosamine N-acyltransferase from Synechococcus sp. (strain CC9902).